A 131-amino-acid chain; its full sequence is Protein Turandot M (131 aa).

The signal sequence occupies residues 1–23; the sequence is MNPAIYLSCLVVFSLLLLGKVNA.

Belongs to the Turandot family.

The protein localises to the secreted. In terms of biological role, a humoral factor that may play a role in stress tolerance. Requires Mekk1 expression in the fat body to regulate response to septic injury and consequent immune response. This chain is Protein Turandot M, found in Drosophila erecta (Fruit fly).